We begin with the raw amino-acid sequence, 239 residues long: Dolichyldiphosphatase (239 aa).

Residues Met1–Ser34 are Lumenal-facing. The helical transmembrane segment at Ala35 to Thr55 threads the bilayer. Residues Arg56–Asn131 lie on the Cytoplasmic side of the membrane. The chain crosses the membrane as a helical span at residues Phe132–Ser152. The Lumenal portion of the chain corresponds to Arg153 to Val164. A helical transmembrane segment spans residues Ile165–Ile185. The Cytoplasmic segment spans residues Arg186–Asp239.

This sequence belongs to the dolichyldiphosphatase family.

It localises to the endoplasmic reticulum membrane. The catalysed reaction is a di-trans,poly-cis-dolichyl diphosphate + H2O = a di-trans,poly-cis-dolichyl phosphate + phosphate + H(+). It functions in the pathway protein modification; protein glycosylation. Its function is as follows. Non-essential protein which is required for efficient N-glycosylation. Necessary for maintaining optimal levels of dolichol-linked oligosaccharides. Hydrolyzes dolichyl pyrophosphate at a very high rate and dolichyl monophosphate at a much lower rate. Does not act on phosphatidate. The protein is Dolichyldiphosphatase (CAX4) of Saccharomyces cerevisiae (strain ATCC 204508 / S288c) (Baker's yeast).